Here is a 60-residue protein sequence, read N- to C-terminus: Large ribosomal subunit protein bL32 (60 aa).

A disordered region spans residues 1–60; the sequence is MAVQQVKKSRSKRDMRRSHDSLTNPTLSTDKSTGELHLRHHVSPNGFYKGRKVVDTKSED. A compositionally biased stretch (basic residues) spans 7-16; it reads KKSRSKRDMR. The span at 22–31 shows a compositional bias: polar residues; sequence LTNPTLSTDK.

This sequence belongs to the bacterial ribosomal protein bL32 family.

The protein is Large ribosomal subunit protein bL32 of Francisella tularensis subsp. holarctica (strain LVS).